A 92-amino-acid polypeptide reads, in one-letter code: UPF0125 protein NMA1005 (92 aa).

The protein belongs to the UPF0125 (RnfH) family.

This chain is UPF0125 protein NMA1005, found in Neisseria meningitidis serogroup A / serotype 4A (strain DSM 15465 / Z2491).